The chain runs to 370 residues: MHCESPIKRRLSRKIWVGSVPVGGDAPIAVQSMTNTDTNDVAATVAQIRRLEDAGADIVRVSVPDMDAAEAFGRIKQQVRVPLVADIHFDYQIALRVAELGVDCLRINPGNIGREDRVKAVVEAARDKGIPIRIGVNAGSLEKDLQKKYGEPTPAALVESALRHVEHLDRLNFPDFKVSVKASDVFMAVEAYRLLAKQIEQPLHLGITEAGGLRSGTVKSAVGLGMLLAEGIGDTIRISLAADPVEEIKVGFDILKSLRLRSRGINFIACPSCSRQNFDVVKTMNELESRVEDLLVPLDVAVIGCVVNGPGEAKEAHIGLTGGSPNNLVYIDGKPASKLTNENLVDELEKLIRDKAAEKAAADAAVIVRS.

[4Fe-4S] cluster contacts are provided by C270, C273, C305, and E312.

It belongs to the IspG family. [4Fe-4S] cluster is required as a cofactor.

It carries out the reaction (2E)-4-hydroxy-3-methylbut-2-enyl diphosphate + oxidized [flavodoxin] + H2O + 2 H(+) = 2-C-methyl-D-erythritol 2,4-cyclic diphosphate + reduced [flavodoxin]. The protein operates within isoprenoid biosynthesis; isopentenyl diphosphate biosynthesis via DXP pathway; isopentenyl diphosphate from 1-deoxy-D-xylulose 5-phosphate: step 5/6. Functionally, converts 2C-methyl-D-erythritol 2,4-cyclodiphosphate (ME-2,4cPP) into 1-hydroxy-2-methyl-2-(E)-butenyl 4-diphosphate. The sequence is that of 4-hydroxy-3-methylbut-2-en-1-yl diphosphate synthase (flavodoxin) from Ectopseudomonas mendocina (strain ymp) (Pseudomonas mendocina).